A 339-amino-acid polypeptide reads, in one-letter code: Flap endonuclease 1 (339 aa).

Residues 1 to 99 are N-domain; it reads MGVNLKEIVD…VAWEKRKKHK (99 aa). Residues aspartate 29, aspartate 81, glutamate 153, glutamate 155, aspartate 174, aspartate 176, and aspartate 237 each contribute to the Mg(2+) site. Residues 117 to 258 are I-domain; that stretch reads EAIKYAKSLG…TAIEIVKRFG (142 aa). The interval 329–337 is interaction with PCNA; that stretch reads NQKTLFSFF.

It belongs to the XPG/RAD2 endonuclease family. FEN1 subfamily. In terms of assembly, interacts with PCNA. PCNA stimulates the nuclease activity without altering cleavage specificity. Mg(2+) serves as cofactor.

Structure-specific nuclease with 5'-flap endonuclease and 5'-3' exonuclease activities involved in DNA replication and repair. During DNA replication, cleaves the 5'-overhanging flap structure that is generated by displacement synthesis when DNA polymerase encounters the 5'-end of a downstream Okazaki fragment. Binds the unpaired 3'-DNA end and kinks the DNA to facilitate 5' cleavage specificity. Cleaves one nucleotide into the double-stranded DNA from the junction in flap DNA, leaving a nick for ligation. Also involved in the base excision repair (BER) pathway. Acts as a genome stabilization factor that prevents flaps from equilibrating into structures that lead to duplications and deletions. Also possesses 5'-3' exonuclease activity on nicked or gapped double-stranded DNA. In Nanoarchaeum equitans (strain Kin4-M), this protein is Flap endonuclease 1.